Reading from the N-terminus, the 186-residue chain is Ribosome maturation factor RimM (186 aa).

In terms of domain architecture, PRC barrel spans 93 to 168 (EDDFYLVDLI…VLIDPPQEEN (76 aa)). A disordered region spans residues 163–186 (PPQEENAPEFGRNELGHDDGGEAA). Over residues 173–186 (GRNELGHDDGGEAA) the composition is skewed to basic and acidic residues.

The protein belongs to the RimM family. Binds ribosomal protein uS19.

It is found in the cytoplasm. Its function is as follows. An accessory protein needed during the final step in the assembly of 30S ribosomal subunit, possibly for assembly of the head region. Essential for efficient processing of 16S rRNA. May be needed both before and after RbfA during the maturation of 16S rRNA. It has affinity for free ribosomal 30S subunits but not for 70S ribosomes. In Granulibacter bethesdensis (strain ATCC BAA-1260 / CGDNIH1), this protein is Ribosome maturation factor RimM.